We begin with the raw amino-acid sequence, 73 residues long: uncharacterized protein (73 aa).

This is an uncharacterized protein from Haemophilus influenzae (strain ATCC 51907 / DSM 11121 / KW20 / Rd).